A 1385-amino-acid chain; its full sequence is DNA-directed RNA polymerase subunit beta (1385 aa).

This sequence belongs to the RNA polymerase beta chain family. As to quaternary structure, the RNAP catalytic core consists of 2 alpha, 1 beta, 1 beta' and 1 omega subunit. When a sigma factor is associated with the core the holoenzyme is formed, which can initiate transcription.

The catalysed reaction is RNA(n) + a ribonucleoside 5'-triphosphate = RNA(n+1) + diphosphate. Functionally, DNA-dependent RNA polymerase catalyzes the transcription of DNA into RNA using the four ribonucleoside triphosphates as substrates. This Jannaschia sp. (strain CCS1) protein is DNA-directed RNA polymerase subunit beta.